The following is a 426-amino-acid chain: Histidinol dehydrogenase (426 aa).

NAD(+) contacts are provided by Tyr123, Gln185, and Asn208. Residues Ser231, Gln253, and His256 each contribute to the substrate site. Zn(2+)-binding residues include Gln253 and His256. Residues Glu321 and His322 each act as proton acceptor in the active site. Residues His322, Asp355, Glu409, and His414 each contribute to the substrate site. Asp355 is a Zn(2+) binding site. His414 is a Zn(2+) binding site.

It belongs to the histidinol dehydrogenase family. Zn(2+) is required as a cofactor.

It catalyses the reaction L-histidinol + 2 NAD(+) + H2O = L-histidine + 2 NADH + 3 H(+). The protein operates within amino-acid biosynthesis; L-histidine biosynthesis; L-histidine from 5-phospho-alpha-D-ribose 1-diphosphate: step 9/9. Functionally, catalyzes the sequential NAD-dependent oxidations of L-histidinol to L-histidinaldehyde and then to L-histidine. This is Histidinol dehydrogenase from Bacillus licheniformis (strain ATCC 14580 / DSM 13 / JCM 2505 / CCUG 7422 / NBRC 12200 / NCIMB 9375 / NCTC 10341 / NRRL NRS-1264 / Gibson 46).